A 198-amino-acid chain; its full sequence is Probable GTP-binding protein EngB (198 aa).

In terms of domain architecture, EngB-type G spans 22–195 (DLPEIALAGR…WKAIHKFTKT (174 aa)). GTP contacts are provided by residues 30-37 (GRSNVGKS), 57-61 (GKTQT), 75-78 (DVPG), 142-145 (TKAD), and 174-176 (FSS). Mg(2+) is bound by residues Ser-37 and Thr-59.

Belongs to the TRAFAC class TrmE-Era-EngA-EngB-Septin-like GTPase superfamily. EngB GTPase family. Requires Mg(2+) as cofactor.

Functionally, necessary for normal cell division and for the maintenance of normal septation. This chain is Probable GTP-binding protein EngB, found in Bacillus cereus (strain B4264).